The sequence spans 759 residues: MRGLLRASSLLLCGVILIQLLAAQIHAQSKKPKSPWPTLTGDPPLVIARGGFSGLFPDSSYDAYNFAILTSVPDAVLWCDVQLTKDALGICFPDLTMRNSSSIEAVYPTRQKSYPVNGVPTSGWFTIDFSLKDLKDVNLIRGILSRSEKFDGNSNPIMTVQSVSTQMKPSFFWLNVQHDAFYAQHNLSMSSFLVAASKTVLIDFISSPEVNFFKKIAGRFGRNGPSLVFRFLGQDEFEPTTNRTYGSILSNLTFVKTFASGILVPKSYILPLDDQQYLLPHTSLVQDAHKAGLEVFVSGFANDIDIAHDYSFDPVSEYLSFVDNGNFSVDGVLSDFPITASASLDCFSHVGRNATKQVDFLVITKDGASGDYPGCTDLAYKKAIKDGADVIDCSVQLSSDGTPFCLSSIDLGNSTTVSLTAFRNRSTTVPELGSLGAIYTFSLTWAEIQTLTPAISNPYRVTSLFRNPKQKNAGKLFSLSDFLSLAKNSTSLSGVLISVENAAYLREEQGLDVVKAVLDTLTQTGYSNSTATKVMIQSTNSSVLVDFKKQSQYETVYKVEENIRDILDSAIEDIKKFADAVVIQKLSVFPVAQSFITTQTNVVEKLQKSQLPVYVELFQNEFLSQPYDFFADATVEINSYITGAGINGTITEFPFTAARYKRNLCLGRKETIPYMAPAQPGALLTLVSPTAFPPAEAPNPVFTDADVTEPPLPPVTAKAPTSSPGTPSTNAQAPSGQTRITLSLLLSVFAMVLASLLLL.

The first 27 residues, 1 to 27 (MRGLLRASSLLLCGVILIQLLAAQIHA), serve as a signal peptide directing secretion. The Extracellular segment spans residues 28–738 (QSKKPKSPWP…TNAQAPSGQT (711 aa)). In terms of domain architecture, GP-PDE 1 spans 44-344 (PLVIARGGFS…DFPITASASL (301 aa)). N-linked (GlcNAc...) asparagine glycans are attached at residues Asn99, Asn186, Asn242, Asn251, Asn326, Asn353, Asn413, Asn424, Asn488, Asn528, Asn540, and Asn647. A GP-PDE 2 domain is found at 360–661 (FLVITKDGAS…EFPFTAARYK (302 aa)). The interval 702–734 (FTDADVTEPPLPPVTAKAPTSSPGTPSTNAQAP) is disordered. The segment covering 719–734 (APTSSPGTPSTNAQAP) has biased composition (polar residues). A helical transmembrane segment spans residues 739–759 (RITLSLLLSVFAMVLASLLLL).

The protein belongs to the glycerophosphoryl diester phosphodiesterase family. Expressed in roots, shoots, rosette and cauline leaves, stems, flowers and siliques.

Its subcellular location is the cell membrane. The catalysed reaction is a sn-glycero-3-phosphodiester + H2O = an alcohol + sn-glycerol 3-phosphate + H(+). In terms of biological role, involved in primary cell wall organization. Required for the accumulation of crystalline cellulose. The protein is Glycerophosphodiester phosphodiesterase GDPDL3 of Arabidopsis thaliana (Mouse-ear cress).